Here is a 161-residue protein sequence, read N- to C-terminus: Transcriptional repressor NrdR (161 aa).

A zinc finger lies at 3 to 34 (CPYCGARDARVIDSRELNGGESIRRRRECIAC). The 91-residue stretch at 49–139 (LMVVKRDGRR…VYRRFADLED (91 aa)) folds into the ATP-cone domain.

This sequence belongs to the NrdR family. Requires Zn(2+) as cofactor.

In terms of biological role, negatively regulates transcription of bacterial ribonucleotide reductase nrd genes and operons by binding to NrdR-boxes. This Thermomicrobium roseum (strain ATCC 27502 / DSM 5159 / P-2) protein is Transcriptional repressor NrdR.